The primary structure comprises 362 residues: Endopolygalacturonase II (362 aa).

Residues 1–21 form the signal peptide; the sequence is MHSFASLLAYGLVAGATFASA. The propeptide occupies 22-27; it reads SPIEAR. C30 and C45 form a disulfide bridge. The stretch at 156–186 is one PbH1 1 repeat; sequence ANDITFTDVTINNADGDTQGGHNTDAFDVGN. The active-site Proton donor is D201. An intrachain disulfide couples C203 to C219. PbH1 repeat units lie at residues 209-229, 238-259, 267-289, and 301-322; these read GENI…SIGS, VKNV…RIKT, VSEI…VIQQ, and TNGV…DSGA. H223 is an active-site residue. N-linked (GlcNAc...) (high mannose) asparagine glycosylation is present at N240. 2 cysteine pairs are disulfide-bonded: C329-C334 and C353-C362.

This sequence belongs to the glycosyl hydrolase 28 family.

Its subcellular location is the secreted. It catalyses the reaction (1,4-alpha-D-galacturonosyl)n+m + H2O = (1,4-alpha-D-galacturonosyl)n + (1,4-alpha-D-galacturonosyl)m.. In terms of biological role, involved in maceration and soft-rotting of plant tissue. Hydrolyzes the 1,4-alpha glycosidic bonds of de-esterified pectate in the smooth region of the plant cell wall. The protein is Endopolygalacturonase II (pgaII) of Aspergillus niger (strain ATCC 1015 / CBS 113.46 / FGSC A1144 / LSHB Ac4 / NCTC 3858a / NRRL 328 / USDA 3528.7).